A 409-amino-acid polypeptide reads, in one-letter code: Na(+)-translocating NADH-quinone reductase subunit F (409 aa).

Residues 5 to 25 (FIFGIIAFTALVLVLAVIILF) traverse the membrane as a helical segment. One can recognise a 2Fe-2S ferredoxin-type domain in the interval 34 to 128 (GDITISINND…SMDVELPEEI (95 aa)). Residues C71, C77, C80, and C112 each coordinate [2Fe-2S] cluster. The FAD-binding FR-type domain maps to 131-271 (VKKWECTVIS…SGPFGEFFAK (141 aa)).

It belongs to the NqrF family. As to quaternary structure, composed of six subunits; NqrA, NqrB, NqrC, NqrD, NqrE and NqrF. Requires [2Fe-2S] cluster as cofactor. It depends on FAD as a cofactor.

It is found in the cell inner membrane. It catalyses the reaction a ubiquinone + n Na(+)(in) + NADH + H(+) = a ubiquinol + n Na(+)(out) + NAD(+). Its function is as follows. NQR complex catalyzes the reduction of ubiquinone-1 to ubiquinol by two successive reactions, coupled with the transport of Na(+) ions from the cytoplasm to the periplasm. The first step is catalyzed by NqrF, which accepts electrons from NADH and reduces ubiquinone-1 to ubisemiquinone by a one-electron transfer pathway. The chain is Na(+)-translocating NADH-quinone reductase subunit F from Actinobacillus pleuropneumoniae serotype 5b (strain L20).